We begin with the raw amino-acid sequence, 474 residues long: tRNA-2-methylthio-N(6)-dimethylallyladenosine synthase (474 aa).

The MTTase N-terminal domain maps to 3 to 120; sequence KKLLIKTWGC…LPEMIKQSQS (118 aa). 6 residues coordinate [4Fe-4S] cluster: C12, C49, C83, C157, C161, and C164. Residues 143-375 enclose the Radical SAM core domain; it reads RAEGATAFVS…QQQINAQAMR (233 aa). A TRAM domain is found at 378 to 441; the sequence is RLMLGTEQRV…ANSLRGEIVR (64 aa).

It belongs to the methylthiotransferase family. MiaB subfamily. As to quaternary structure, monomer. [4Fe-4S] cluster is required as a cofactor.

It is found in the cytoplasm. The enzyme catalyses N(6)-dimethylallyladenosine(37) in tRNA + (sulfur carrier)-SH + AH2 + 2 S-adenosyl-L-methionine = 2-methylsulfanyl-N(6)-dimethylallyladenosine(37) in tRNA + (sulfur carrier)-H + 5'-deoxyadenosine + L-methionine + A + S-adenosyl-L-homocysteine + 2 H(+). Catalyzes the methylthiolation of N6-(dimethylallyl)adenosine (i(6)A), leading to the formation of 2-methylthio-N6-(dimethylallyl)adenosine (ms(2)i(6)A) at position 37 in tRNAs that read codons beginning with uridine. In Vibrio vulnificus (strain CMCP6), this protein is tRNA-2-methylthio-N(6)-dimethylallyladenosine synthase.